Consider the following 233-residue polypeptide: Coproporphyrinogen-III oxidase 2, chloroplastic (233 aa).

The transit peptide at 1–48 (MASHSSTLFTSPSSFILFSSHRLKSSPNYFTYHFPRSVKRPHFDLRCS) directs the protein to the chloroplast. Ser174 is a binding site for substrate. His188 acts as the Proton donor in catalysis.

The protein belongs to the aerobic coproporphyrinogen-III oxidase family. In terms of assembly, homodimer.

The protein localises to the plastid. The protein resides in the chloroplast. It catalyses the reaction coproporphyrinogen III + O2 + 2 H(+) = protoporphyrinogen IX + 2 CO2 + 2 H2O. The protein operates within porphyrin-containing compound metabolism; protoporphyrin-IX biosynthesis; protoporphyrinogen-IX from coproporphyrinogen-III (O2 route): step 1/1. It functions in the pathway porphyrin-containing compound metabolism; chlorophyll biosynthesis. Its function is as follows. Key enzyme in heme biosynthesis. Catalyzes the oxidative decarboxylation of propionic acid side chains of rings A and B of coproporphyrinogen III. In Arabidopsis thaliana (Mouse-ear cress), this protein is Coproporphyrinogen-III oxidase 2, chloroplastic (CPX2).